We begin with the raw amino-acid sequence, 964 residues long: Phosphoenolpyruvate carboxylase (964 aa).

Ser11 is subject to Phosphoserine. Residues His172 and Lys600 contribute to the active site.

Belongs to the PEPCase type 1 family. As to quaternary structure, homotetramer. Mg(2+) is required as a cofactor.

It localises to the cytoplasm. It carries out the reaction oxaloacetate + phosphate = phosphoenolpyruvate + hydrogencarbonate. It participates in photosynthesis; C4 acid pathway. By light-reversible phosphorylation. Functionally, through the carboxylation of phosphoenolpyruvate (PEP) it forms oxaloacetate, a four-carbon dicarboxylic acid source for the tricarboxylic acid cycle. In Nicotiana tabacum (Common tobacco), this protein is Phosphoenolpyruvate carboxylase (PPC).